The sequence spans 59 residues: Anti-inflammatory peptide amregulin (59 aa).

The N-terminal stretch at 1 to 19 (MKLHMLNMLNCLLLTVCDG) is a signal peptide.

Salivary glands.

Its subcellular location is the secreted. Anti-inflammatory peptide that may facilitate successful blood feeding of ticks and may lead to immunotolerance in its host. Inhibits the secretion of inflammatory factors in rat splenocytes, such as tumor necrosis factor-alpha (TNF), interleukin-1, interleukin-8 (CXCL8) and interferon-gamma (IFNG). In addition, shows strong free radical scavenging and antioxidant activities in vitro. In vivo, inhibits adjuvant-induced paw inflammation in mouse models. In Amblyomma variegatum (Tropical bont tick), this protein is Anti-inflammatory peptide amregulin.